A 147-amino-acid polypeptide reads, in one-letter code: Putative 2'-deoxynucleoside 5'-phosphate N-hydrolase 1 (147 aa).

Substrate contacts are provided by residues 10–16 (YFCGSIR), Tyr25, His42, Glu90, and 114–116 (SAM).

This sequence belongs to the 2'-deoxynucleoside 5'-phosphate N-hydrolase 1 family. As to quaternary structure, monomer and homodimer.

Its subcellular location is the cytoplasm. The protein localises to the nucleus. It catalyses the reaction a pyrimidine 2'-deoxyribonucleoside 5'-phosphate + H2O = a pyrimidine nucleobase + 2-deoxy-D-ribose 5-phosphate. The enzyme catalyses a purine 2'-deoxyribonucleoside 5'-phosphate + H2O = a purine nucleobase + 2-deoxy-D-ribose 5-phosphate. Functionally, catalyzes the cleavage of the N-glycosidic bond of deoxyribonucleoside 5'-monophosphates to yield deoxyribose 5-phosphate and a purine or pyrimidine base. In Nematostella vectensis (Starlet sea anemone), this protein is Putative 2'-deoxynucleoside 5'-phosphate N-hydrolase 1.